Here is a 277-residue protein sequence, read N- to C-terminus: Shikimate dehydrogenase (NADP(+)) (277 aa).

Residues 15–17 (SLS) and Thr62 contribute to the shikimate site. The active-site Proton acceptor is Lys66. The shikimate site is built by Asn87 and Asp102. Residues 127-131 (GAGGA) and Ile219 contribute to the NADP(+) site. Tyr221 is a binding site for shikimate. Gly242 contributes to the NADP(+) binding site.

It belongs to the shikimate dehydrogenase family. In terms of assembly, homodimer.

The enzyme catalyses shikimate + NADP(+) = 3-dehydroshikimate + NADPH + H(+). Its pathway is metabolic intermediate biosynthesis; chorismate biosynthesis; chorismate from D-erythrose 4-phosphate and phosphoenolpyruvate: step 4/7. Its function is as follows. Involved in the biosynthesis of the chorismate, which leads to the biosynthesis of aromatic amino acids. Catalyzes the reversible NADPH linked reduction of 3-dehydroshikimate (DHSA) to yield shikimate (SA). The polypeptide is Shikimate dehydrogenase (NADP(+)) (Bacillus cytotoxicus (strain DSM 22905 / CIP 110041 / 391-98 / NVH 391-98)).